The primary structure comprises 450 residues: tRNA modification GTPase MnmE (450 aa).

(6S)-5-formyl-5,6,7,8-tetrahydrofolate-binding residues include Arg20, Glu78, and Lys117. The 162-residue stretch at 211–372 (GLRMVIVGKP…LEESIYRETQ (162 aa)) folds into the TrmE-type G domain. Asn221 provides a ligand contact to K(+). Residues 221 to 226 (NVGKST), 240 to 246 (TDIPGTT), and 265 to 268 (DTAG) each bind GTP. Residue Ser225 participates in Mg(2+) binding. Residues Thr240, Ile242, and Thr245 each coordinate K(+). Thr246 contributes to the Mg(2+) binding site. Lys450 serves as a coordination point for (6S)-5-formyl-5,6,7,8-tetrahydrofolate.

Belongs to the TRAFAC class TrmE-Era-EngA-EngB-Septin-like GTPase superfamily. TrmE GTPase family. As to quaternary structure, homodimer. Heterotetramer of two MnmE and two MnmG subunits. Requires K(+) as cofactor.

Its subcellular location is the cytoplasm. In terms of biological role, exhibits a very high intrinsic GTPase hydrolysis rate. Involved in the addition of a carboxymethylaminomethyl (cmnm) group at the wobble position (U34) of certain tRNAs, forming tRNA-cmnm(5)s(2)U34. In Thermotoga sp. (strain RQ2), this protein is tRNA modification GTPase MnmE.